A 163-amino-acid chain; its full sequence is Large ribosomal subunit protein uL11 (163 aa).

The segment at Met-1 to Pro-26 is disordered.

The protein belongs to the universal ribosomal protein uL11 family. As to quaternary structure, part of the ribosomal stalk of the 50S ribosomal subunit. Interacts with L10 and the large rRNA to form the base of the stalk. L10 forms an elongated spine to which L12 dimers bind in a sequential fashion forming a multimeric L10(L12)X complex.

Forms part of the ribosomal stalk which helps the ribosome interact with GTP-bound translation factors. In Halobacterium salinarum (strain ATCC 29341 / DSM 671 / R1), this protein is Large ribosomal subunit protein uL11.